A 454-amino-acid polypeptide reads, in one-letter code: Cobyrinate a,c-diamide synthase (454 aa).

In terms of domain architecture, GATase cobBQ-type spans 247-442 (KIGIAMDSAF…IHAHWASNPN (196 aa)). C329 serves as the catalytic Nucleophile.

Belongs to the CobB/CbiA family. Requires Mg(2+) as cofactor.

It carries out the reaction cob(II)yrinate + 2 L-glutamine + 2 ATP + 2 H2O = cob(II)yrinate a,c diamide + 2 L-glutamate + 2 ADP + 2 phosphate + 2 H(+). It participates in cofactor biosynthesis; adenosylcobalamin biosynthesis; cob(II)yrinate a,c-diamide from sirohydrochlorin (anaerobic route): step 10/10. In terms of biological role, catalyzes the ATP-dependent amidation of the two carboxylate groups at positions a and c of cobyrinate, using either L-glutamine or ammonia as the nitrogen source. This is Cobyrinate a,c-diamide synthase from Leptospira interrogans serogroup Icterohaemorrhagiae serovar Lai (strain 56601).